Here is a 1813-residue protein sequence, read N- to C-terminus: Nonribosomal peptide synthetase 1 (1813 aa).

The tract at residues 89-494 is adenylation; sequence EKARRDPSRQ…GRGDQQVKLR (406 aa). Residues 624–699 enclose the Carrier 1 domain; the sequence is EPQSERERQL…ELAITLKHSD (76 aa). The residue at position 660 (S660) is an O-(pantetheine 4'-phosphoryl)serine. A condensation 1 region spans residues 738–1159; sequence DVYPCTTLQE…LPMTDDELAE (422 aa). One can recognise a Carrier 2 domain in the interval 1282–1358; that stretch reads QVTTPKQQKL…DMADIAKESL (77 aa). The residue at position 1319 (S1319) is an O-(pantetheine 4'-phosphoryl)serine. Positions 1427–1806 are condensation 2; the sequence is FYLDAAVDQS…STLFQTDVME (380 aa).

The protein belongs to the NRP synthetase family.

The protein operates within siderophore biosynthesis. Nonribosomal peptide synthetase; part of the gene cluster that mediates the biosynthesis of hydroxamate-containing siderophores that play a critical role in virulence via intracellular iron acquisition during macrophage infection. The chain is Nonribosomal peptide synthetase 1 from Ajellomyces capsulatus (Darling's disease fungus).